We begin with the raw amino-acid sequence, 153 residues long: Endoribonuclease YbeY (153 aa).

The Zn(2+) site is built by H114, H118, and H124.

It belongs to the endoribonuclease YbeY family. Zn(2+) serves as cofactor.

It is found in the cytoplasm. Functionally, single strand-specific metallo-endoribonuclease involved in late-stage 70S ribosome quality control and in maturation of the 3' terminus of the 16S rRNA. This is Endoribonuclease YbeY from Shewanella baltica (strain OS195).